Here is a 237-residue protein sequence, read N- to C-terminus: Protein GrpE (237 aa).

Disordered stretches follow at residues 1-52 (MSGD…RLQQ) and 200-237 (KVSM…QPGV). Polar residues predominate over residues 27 to 40 (ASINSDEGQSSAQS). The segment covering 204–218 (GPGPQSGASPSSAQP) has biased composition (low complexity).

It belongs to the GrpE family. In terms of assembly, homodimer.

The protein localises to the cytoplasm. In terms of biological role, participates actively in the response to hyperosmotic and heat shock by preventing the aggregation of stress-denatured proteins, in association with DnaK and GrpE. It is the nucleotide exchange factor for DnaK and may function as a thermosensor. Unfolded proteins bind initially to DnaJ; upon interaction with the DnaJ-bound protein, DnaK hydrolyzes its bound ATP, resulting in the formation of a stable complex. GrpE releases ADP from DnaK; ATP binding to DnaK triggers the release of the substrate protein, thus completing the reaction cycle. Several rounds of ATP-dependent interactions between DnaJ, DnaK and GrpE are required for fully efficient folding. This chain is Protein GrpE, found in Prochlorococcus marinus (strain MIT 9313).